We begin with the raw amino-acid sequence, 284 residues long: NAD kinase (284 aa).

Residue aspartate 70 is the Proton acceptor of the active site. NAD(+)-binding positions include aspartate 70–glycine 71, asparagine 139–glutamate 140, lysine 167, aspartate 169, leucine 177, threonine 180–serine 185, and glutamine 236.

This sequence belongs to the NAD kinase family. Requires a divalent metal cation as cofactor.

The protein localises to the cytoplasm. It carries out the reaction NAD(+) + ATP = ADP + NADP(+) + H(+). Involved in the regulation of the intracellular balance of NAD and NADP, and is a key enzyme in the biosynthesis of NADP. Catalyzes specifically the phosphorylation on 2'-hydroxyl of the adenosine moiety of NAD to yield NADP. In Helicobacter pylori (strain Shi470), this protein is NAD kinase.